The sequence spans 273 residues: Large ribosomal subunit protein uL2 (273 aa).

The disordered stretch occupies residues 228–273 (VDHPHGGGEGKTSGGRHPVTPWGFPTKGKKTRKNKRTSKFIVKKRK). A compositionally biased stretch (basic residues) spans 254–273 (KGKKTRKNKRTSKFIVKKRK).

It belongs to the universal ribosomal protein uL2 family. As to quaternary structure, part of the 50S ribosomal subunit. Forms a bridge to the 30S subunit in the 70S ribosome.

One of the primary rRNA binding proteins. Required for association of the 30S and 50S subunits to form the 70S ribosome, for tRNA binding and peptide bond formation. It has been suggested to have peptidyltransferase activity; this is somewhat controversial. Makes several contacts with the 16S rRNA in the 70S ribosome. This is Large ribosomal subunit protein uL2 from Rickettsia massiliae (strain Mtu5).